The primary structure comprises 180 residues: Bifunctional bis(5'-adenosyl)-triphosphatase/adenylylsulfatase FHIT (180 aa).

An HIT domain is found at 27 to 134 (SYAFGPYKID…LPRKGGDFEK (108 aa)). Residues Asn52 and Gln108 each coordinate substrate. A Histidine triad motif motif is present at residues 119-123 (HVHIH). Residue His121 is the Tele-AMP-histidine intermediate of the active site. Residue His123 participates in substrate binding.

It catalyses the reaction P(1),P(3)-bis(5'-adenosyl) triphosphate + H2O = AMP + ADP + 2 H(+). It carries out the reaction adenosine 5'-phosphosulfate + H2O = sulfate + AMP + 2 H(+). The enzyme catalyses adenosine 5'-phosphosulfate + NH4(+) = adenosine 5'-phosphoramidate + sulfate + 2 H(+). The catalysed reaction is adenosine 5'-phosphoramidate + H2O = AMP + NH4(+). Its function is as follows. Possesses dinucleoside triphosphate hydrolase activity. Cleaves P(1)-P(3)-bis(5'-adenosyl) triphosphate (Ap3A) to yield AMP and ADP. Exhibits adenylylsulfatase activity, hydrolyzing adenosine 5'-phosphosulfate to yield AMP and sulfate. Exhibits adenosine 5'-monophosphoramidase activity, hydrolyzing purine nucleotide phosphoramidates with a single phosphate group such as adenosine 5'monophosphoramidate (AMP-NH2) to yield AMP and NH2. Exhibits adenylylsulfate-ammonia adenylyltransferase, catalyzing the ammonolysis of adenosine 5'-phosphosulfate resulting in the formation of adenosine 5'-phosphoramidate. The chain is Bifunctional bis(5'-adenosyl)-triphosphatase/adenylylsulfatase FHIT from Arabidopsis thaliana (Mouse-ear cress).